The chain runs to 198 residues: Recombination protein RecR (198 aa).

The C4-type zinc-finger motif lies at 57 to 72 (CSVCGHITDQDPCYIC). A Toprim domain is found at 80 to 175 (SVICVVQDPK…KLSRIAHGLP (96 aa)).

It belongs to the RecR family.

May play a role in DNA repair. It seems to be involved in an RecBC-independent recombinational process of DNA repair. It may act with RecF and RecO. The chain is Recombination protein RecR from Bacillus pumilus (strain SAFR-032).